The sequence spans 801 residues: Na(+)/H(+) antiporter subunit A1 (801 aa).

21 helical membrane passes run 4–25, 30–49, 79–101, 108–127, 131–153, 166–188, 208–230, 243–265, 270–289, 302–324, 339–361, 373–395, 429–451, 472–494, 526–548, 589–611, 621–641, 646–668, 672–694, 707–729, and 767–784; these read LHIA…YRFF, LGWF…LTLI, LGLL…SIGY, LGNF…GVVL, VIIL…SFWR, LIIT…IPTQ, FIFA…PFYI, SAYL…MTPI, QGWI…WASL, AFST…ISYH, AAIF…TGAV, LGGL…LSMA, YLFP…KFIM, ILML…FPGI, AFLS…SYWV, NNLV…SVPF, IRIF…LILF, LFSI…FFKA, ALTQ…YHLP, LTNA…IAYG, and LFES…YTMI.

The protein belongs to the CPA3 antiporters (TC 2.A.63) subunit A family. As to quaternary structure, may form a heterooligomeric complex that consists of seven subunits: mnhA1, mnhB1, mnhC1, mnhD1, mnhE1, mnhF1 and mnhG1.

The protein resides in the cell membrane. With respect to regulation, na(+) extrusion is completely inhibited by the H(+) conductor carbonyl cyanide m-chlorophenylhydrazone (CCCP). Mnh complex is a Na(+)/H(+) antiporter involved in Na(+) excretion. This chain is Na(+)/H(+) antiporter subunit A1 (mnhA1), found in Staphylococcus aureus (strain MRSA252).